The chain runs to 190 residues: Hypoxanthine/guanine phosphoribosyltransferase (190 aa).

The protein belongs to the purine/pyrimidine phosphoribosyltransferase family. Archaeal HPRT subfamily. As to quaternary structure, homodimer.

It localises to the cytoplasm. The enzyme catalyses IMP + diphosphate = hypoxanthine + 5-phospho-alpha-D-ribose 1-diphosphate. It carries out the reaction GMP + diphosphate = guanine + 5-phospho-alpha-D-ribose 1-diphosphate. The protein operates within purine metabolism; IMP biosynthesis via salvage pathway; IMP from hypoxanthine: step 1/1. In terms of biological role, catalyzes a salvage reaction resulting in the formation of IMP that is energically less costly than de novo synthesis. In Methanohalophilus mahii (strain ATCC 35705 / DSM 5219 / SLP), this protein is Hypoxanthine/guanine phosphoribosyltransferase.